The chain runs to 588 residues: Proline--tRNA ligase (588 aa).

This sequence belongs to the class-II aminoacyl-tRNA synthetase family. ProS type 1 subfamily. In terms of assembly, homodimer.

It localises to the cytoplasm. It carries out the reaction tRNA(Pro) + L-proline + ATP = L-prolyl-tRNA(Pro) + AMP + diphosphate. Its function is as follows. Catalyzes the attachment of proline to tRNA(Pro) in a two-step reaction: proline is first activated by ATP to form Pro-AMP and then transferred to the acceptor end of tRNA(Pro). As ProRS can inadvertently accommodate and process non-cognate amino acids such as alanine and cysteine, to avoid such errors it has two additional distinct editing activities against alanine. One activity is designated as 'pretransfer' editing and involves the tRNA(Pro)-independent hydrolysis of activated Ala-AMP. The other activity is designated 'posttransfer' editing and involves deacylation of mischarged Ala-tRNA(Pro). The misacylated Cys-tRNA(Pro) is not edited by ProRS. This Helicobacter hepaticus (strain ATCC 51449 / 3B1) protein is Proline--tRNA ligase.